A 155-amino-acid polypeptide reads, in one-letter code: SsrA-binding protein (155 aa).

The tract at residues 132 to 155 (DKREDLKQKQMKRDVDRAIKDHMR) is disordered.

The protein belongs to the SmpB family.

Its subcellular location is the cytoplasm. Its function is as follows. Required for rescue of stalled ribosomes mediated by trans-translation. Binds to transfer-messenger RNA (tmRNA), required for stable association of tmRNA with ribosomes. tmRNA and SmpB together mimic tRNA shape, replacing the anticodon stem-loop with SmpB. tmRNA is encoded by the ssrA gene; the 2 termini fold to resemble tRNA(Ala) and it encodes a 'tag peptide', a short internal open reading frame. During trans-translation Ala-aminoacylated tmRNA acts like a tRNA, entering the A-site of stalled ribosomes, displacing the stalled mRNA. The ribosome then switches to translate the ORF on the tmRNA; the nascent peptide is terminated with the 'tag peptide' encoded by the tmRNA and targeted for degradation. The ribosome is freed to recommence translation, which seems to be the essential function of trans-translation. This Oceanobacillus iheyensis (strain DSM 14371 / CIP 107618 / JCM 11309 / KCTC 3954 / HTE831) protein is SsrA-binding protein.